The sequence spans 192 residues: Aminodeoxychorismate synthase component 2 (192 aa).

A Glutamine amidotransferase type-1 domain is found at 3–192 (SVLMIDNCDS…LANLIHRPCH (190 aa)). Catalysis depends on residues Cys83, His170, and Glu172.

In terms of assembly, monomer. Heterodimer consisting of two non-identical subunits: a glutamine amidotransferase subunit (PabA) and a aminodeoxychorismate synthase subunit (PabB).

The catalysed reaction is chorismate + L-glutamine = 4-amino-4-deoxychorismate + L-glutamate. It participates in cofactor biosynthesis; tetrahydrofolate biosynthesis; 4-aminobenzoate from chorismate: step 1/2. Functionally, part of a heterodimeric complex that catalyzes the two-step biosynthesis of 4-amino-4-deoxychorismate (ADC), a precursor of p-aminobenzoate (PABA) and tetrahydrofolate. In the first step, a glutamine amidotransferase (PabA) generates ammonia as a substrate that, along with chorismate, is used in the second step, catalyzed by aminodeoxychorismate synthase (PabB) to produce ADC. PabA converts glutamine into glutamate only in the presence of stoichiometric amounts of PabB. The chain is Aminodeoxychorismate synthase component 2 from Streptomyces lividans.